The chain runs to 94 residues: DNA-directed RNA polymerase subunit omega (94 aa).

This sequence belongs to the RNA polymerase subunit omega family. The RNAP catalytic core consists of 2 alpha, 1 beta, 1 beta' and 1 omega subunit. When a sigma factor is associated with the core the holoenzyme is formed, which can initiate transcription.

It catalyses the reaction RNA(n) + a ribonucleoside 5'-triphosphate = RNA(n+1) + diphosphate. In terms of biological role, promotes RNA polymerase assembly. Latches the N- and C-terminal regions of the beta' subunit thereby facilitating its interaction with the beta and alpha subunits. The polypeptide is DNA-directed RNA polymerase subunit omega (Photobacterium profundum (strain SS9)).